Reading from the N-terminus, the 2617-residue chain is Non-reducing polyketide synthase epaA (2617 aa).

Residues 95 to 231 (PNILLSPMVV…AARSISSLQQ (137 aa)) are N-terminal acylcarrier protein transacylase domain (SAT). Cysteine 132 (nucleophile; for transacylase activity) is an active-site residue. The active-site Proton donor/acceptor; for transacylase activity is the histidine 250. The region spanning 372–790 (PNEIAVIGMS…GSNASMVVAQ (419 aa)) is the Ketosynthase family 3 (KS3) domain. Residues cysteine 539, histidine 674, and histidine 713 each act as for beta-ketoacyl synthase activity in the active site. Positions 902 to 1193 (FGGQISNYVG…ITSMASRALG (292 aa)) are malonyl-CoA:ACP transacylase (MAT) domain. The segment at 1282–1413 (PKTLWSLIEA…GKLAFLSGQD (132 aa)) is N-terminal hotdog fold. Residues 1282-1591 (PKTLWSLIEA…YHKVAKASMS (310 aa)) enclose the PKS/mFAS DH domain. The tract at residues 1310–1589 (LVSGHVIANT…INYHKVAKAS (280 aa)) is product template (PT) domain. Histidine 1314 functions as the Proton acceptor; for dehydratase activity in the catalytic mechanism. The tract at residues 1443 to 1591 (ADDIIQGRNI…YHKVAKASMS (149 aa)) is C-terminal hotdog fold. Residue aspartate 1499 is the Proton donor; for dehydratase activity of the active site. Residues 1600-1651 (TEAAPSSSTRAHPTSSSSPRLPGPSVPEDKSQNETQPAGTNAVAKKKSEKSA) are disordered. The span at 1602–1619 (AAPSSSTRAHPTSSSSPR) shows a compositional bias: low complexity. In terms of domain architecture, Carrier spans 1653–1727 (QNVLEKTRAL…GLVEYVQSAV (75 aa)). O-(pantetheine 4'-phosphoryl)serine is present on serine 1687. The disordered stretch occupies residues 1728–1799 (GVPTNGDEPD…PAMPPASSKT (72 aa)). Positions 1750 to 1766 (LAPSPSSSSSSTNLTED) are enriched in low complexity. Positions 1769-1785 (LDQAETTTNISSYPGQT) are enriched in polar residues. The interval 1970–2158 (DSLLNKLSYR…VGYGQVDWTD (189 aa)) is methyltransferase domain. The segment at 2240 to 2485 (ITGATGSLGV…LCWTPVNDVA (246 aa)) is NADPH-binding (R) domain.

Pantetheine 4'-phosphate serves as cofactor.

It participates in secondary metabolite biosynthesis. Its function is as follows. Non-reducing polyketide synthase; part of the gene cluster that mediates the biosynthesis of nigerpyrone and its derivatives carbonarone A and pestalamide A. The biosynthesis pathway begins with the polyketide assembly by epaA to form phenylacetyl triketide precursor from successive condensation of two malonyl-CoA, presumably with one phenylacetyl-CoA starter unit produced by the phenylacetyl-CoA ligase epaB. For the nigerpyrone biosynthesis, the reactive polyketide chain is released as an aldehyde through the R-domain. A nonenzymatic cyclization and dehydration may create nigerpyrone. For the biosynthesis of carbonarone A and pestalamide A, an extra methyl group is added through the C-methyltransferase domain. Several further steps involving the dehydrogenase orf1, the cytochrome P450 monooxygenase orf2 and the FAD-dependent monooxygenase orf3 are required to form a carbonarone A precursor which is converted to carbonarone A via cyclization. The O-acetyltransferase epaC could catalyze the transfer of 2-methylsuccinyl-CoA, a common intermediate in the ethylmalonyl-CoA pathway, to generate the final product pestalamide A. This chain is Non-reducing polyketide synthase epaA, found in Aspergillus niger (strain ATCC MYA-4892 / CBS 513.88 / FGSC A1513).